We begin with the raw amino-acid sequence, 188 residues long: ATP synthase subunit b (188 aa).

The helical transmembrane segment at 30–50 (IVWSLIPFLIILIVFWKLVLP) threads the bilayer.

It belongs to the ATPase B chain family. F-type ATPases have 2 components, F(1) - the catalytic core - and F(0) - the membrane proton channel. F(1) has five subunits: alpha(3), beta(3), gamma(1), delta(1), epsilon(1). F(0) has three main subunits: a(1), b(2) and c(10-14). The alpha and beta chains form an alternating ring which encloses part of the gamma chain. F(1) is attached to F(0) by a central stalk formed by the gamma and epsilon chains, while a peripheral stalk is formed by the delta and b chains.

The protein localises to the cell membrane. Functionally, f(1)F(0) ATP synthase produces ATP from ADP in the presence of a proton or sodium gradient. F-type ATPases consist of two structural domains, F(1) containing the extramembraneous catalytic core and F(0) containing the membrane proton channel, linked together by a central stalk and a peripheral stalk. During catalysis, ATP synthesis in the catalytic domain of F(1) is coupled via a rotary mechanism of the central stalk subunits to proton translocation. In terms of biological role, component of the F(0) channel, it forms part of the peripheral stalk, linking F(1) to F(0). The polypeptide is ATP synthase subunit b (Corynebacterium glutamicum (strain R)).